The chain runs to 395 residues: MLLSRNLRALAAIHLWIVYLLLEDLLGTCAEGDNQRLVASAPYQDIEITLEKPRVQAVAEPHTLRYDLMALSLEVPGLPQFLTLRYFDDEPFLPYKKNSSITDSQEPRIKDHLRAETWGRETDDLQEEEEQLKGMLAEITAQNGQNTDLHILQATFGCELQRNGSTRGFWKLGYDGQNFLTFDQKTLTWTVDGPSTQKNKTFWKTRAPRADLVKTFLDDICPAQLQRYLASLRNGLLNTGFPKVIVTFRNYPVGRITLTCRAFRLYTRVATLTWLQYRKPVQQKTFGSETILPSGDGTYQAWVSIRVLPGQESQFSCNLKHGNHNINEPAATEAPVYGARREQPPTSGVGSRVGKSLWSAMTTALVVISWTLSQKLMGPLLWFCSGGFCSFLQCW.

An N-terminal signal peptide occupies residues 1–32 (MLLSRNLRALAAIHLWIVYLLLEDLLGTCAEG). The segment at 57–148 (AVAEPHTLRY…ITAQNGQNTD (92 aa)) is alpha-1. N-linked (GlcNAc...) asparagine glycans are attached at residues Asn-98, Asn-163, and Asn-199. The segment at 149–240 (LHILQATFGC…SLRNGLLNTG (92 aa)) is alpha-2. Disulfide bonds link Cys-158-Cys-221 and Cys-260-Cys-317. Positions 241 to 337 (FPKVIVTFRN…EPAATEAPVY (97 aa)) are alpha-3. Residues 242-333 (PKVIVTFRNY…HNINEPAATE (92 aa)) form the Ig-like C1-type domain. Residues 332–352 (TEAPVYGARREQPPTSGVGSR) form a disordered region. The interval 338–368 (GARREQPPTSGVGSRVGKSLWSAMTTALVVI) is connecting peptide. Ser-369 carries GPI-anchor amidated serine lipidation. Residues 370–395 (WTLSQKLMGPLLWFCSGGFCSFLQCW) constitute a propeptide, removed in mature form.

It belongs to the MHC class I family. As to quaternary structure, heterodimer with B2M. In terms of processing, N-glycosylated. As to expression, expressed in stomach, intestine, uterus, skeletal muscle and heart.

The protein resides in the cell membrane. This Mus musculus (Mouse) protein is MHC class I-like protein MILL1.